Here is a 44-residue protein sequence, read N- to C-terminus: U9-ctenitoxin-Co1a (44 aa).

Cystine bridges form between C3–C17, C10–C23, C16–C33, and C25–C31.

As to expression, expressed by the venom gland.

Its subcellular location is the secreted. Insecticidal neurotoxin that reversibly inhibits the N-methyl-D-aspartate (NMDA)-subtype of ionotropic glutamate receptor (GRIN) and inhibits inactivation of insect sodium channels (Nav). In vivo, is highly toxic to insects. The chain is U9-ctenitoxin-Co1a from Ctenus ornatus (Brazilian spider).